A 161-amino-acid polypeptide reads, in one-letter code: Non-secretory ribonuclease (161 aa).

A signal peptide spans 1–27 (MVPKLFTSQICLLLLLGLLAVEGSLHV). Residue Trp-34 is glycosylated (C-linked (Man) tryptophan). The Proton acceptor role is filled by His-42. A glycan (N-linked (GlcNAc...) asparagine) is linked at Asn-44. 4 disulfide bridges follow: Cys-50/Cys-110, Cys-64/Cys-123, Cys-82/Cys-138, and Cys-89/Cys-98. Tyr-60 bears the 3'-nitrotyrosine mark. A substrate-binding site is contributed by 65–69 (KNQNT). N-linked (GlcNAc...) asparagine glycans are attached at residues Asn-86, Asn-92, Asn-111, and Asn-119. Catalysis depends on His-156, which acts as the Proton donor.

The protein belongs to the pancreatic ribonuclease family. Interacts with and forms a tight 1:1 complex with RNH1. Dimerization of two such complexes may occur.

The protein resides in the lysosome. The protein localises to the cytoplasmic granule. The catalysed reaction is an [RNA] containing cytidine + H2O = an [RNA]-3'-cytidine-3'-phosphate + a 5'-hydroxy-ribonucleotide-3'-[RNA].. The enzyme catalyses an [RNA] containing uridine + H2O = an [RNA]-3'-uridine-3'-phosphate + a 5'-hydroxy-ribonucleotide-3'-[RNA].. Its function is as follows. This is a non-secretory ribonuclease. It is a pyrimidine specific nuclease with a slight preference for U. Cytotoxin and helminthotoxin. Possesses a wide variety of biological activities. The polypeptide is Non-secretory ribonuclease (RNASE2) (Gorilla gorilla gorilla (Western lowland gorilla)).